The primary structure comprises 461 residues: Argininosuccinate lyase (461 aa).

Belongs to the lyase 1 family. Argininosuccinate lyase subfamily.

The protein resides in the cytoplasm. It carries out the reaction 2-(N(omega)-L-arginino)succinate = fumarate + L-arginine. It participates in amino-acid biosynthesis; L-arginine biosynthesis; L-arginine from L-ornithine and carbamoyl phosphate: step 3/3. The polypeptide is Argininosuccinate lyase (Laribacter hongkongensis (strain HLHK9)).